Reading from the N-terminus, the 217-residue chain is Proteasome subunit beta type-6-B like protein (217 aa).

A propeptide spans 1–16 (removed in mature form); the sequence is MERHFMDSQIKGVSTG. The active-site Nucleophile is Thr17.

The protein belongs to the peptidase T1B family. As to quaternary structure, the 26S proteasome consists of a 20S proteasome core and two 19S regulatory subunits. The 20S proteasome core is composed of 28 subunits that are arranged in four stacked rings, resulting in a barrel-shaped structure. The two end rings are each formed by seven alpha subunits, and the two central rings are each formed by seven beta subunits. The catalytic chamber with the active sites is on the inside of the barrel.

Its subcellular location is the cytoplasm. The protein localises to the nucleus. The catalysed reaction is Cleavage of peptide bonds with very broad specificity.. In terms of biological role, the proteasome is a multicatalytic proteinase complex which is characterized by its ability to cleave peptides with Arg, Phe, Tyr, Leu, and Glu adjacent to the leaving group at neutral or slightly basic pH. The proteasome has an ATP-dependent proteolytic activity. This subunit is involved in antigen processing to generate class I binding peptides. The sequence is that of Proteasome subunit beta type-6-B like protein (psmb6l-b) from Salmo salar (Atlantic salmon).